A 208-amino-acid chain; its full sequence is Truncated thymidylate kinase (208 aa).

It belongs to the thymidylate kinase family.

Catalyzes the conversion of dTMP to dTDP. This Ornithodoros (relapsing fever ticks) protein is Truncated thymidylate kinase (TMK).